A 434-amino-acid chain; its full sequence is Glutamate-1-semialdehyde 2,1-aminomutase (434 aa).

K274 carries the N6-(pyridoxal phosphate)lysine modification.

The protein belongs to the class-III pyridoxal-phosphate-dependent aminotransferase family. HemL subfamily. Homodimer. Requires pyridoxal 5'-phosphate as cofactor.

It localises to the cytoplasm. It catalyses the reaction (S)-4-amino-5-oxopentanoate = 5-aminolevulinate. The protein operates within porphyrin-containing compound metabolism; protoporphyrin-IX biosynthesis; 5-aminolevulinate from L-glutamyl-tRNA(Glu): step 2/2. This is Glutamate-1-semialdehyde 2,1-aminomutase from Acidovorax ebreus (strain TPSY) (Diaphorobacter sp. (strain TPSY)).